The following is a 218-amino-acid chain: Glycerol-3-phosphate acyltransferase (218 aa).

5 helical membrane passes run 10-30 (LTLGIAIVGGYLLGSIPFGLI), 60-80 (DLAAITLLGDAGKGVVAVLLA), 88-108 (PAIIALAGGSAFLGHLFPVWL), 125-145 (SAAWPVGVAAGATWLAMAFLF), and 165-185 (AFDQPYPFMGLCLFMAVLIFI).

This sequence belongs to the PlsY family. As to quaternary structure, probably interacts with PlsX.

The protein localises to the cell inner membrane. The catalysed reaction is an acyl phosphate + sn-glycerol 3-phosphate = a 1-acyl-sn-glycero-3-phosphate + phosphate. Its pathway is lipid metabolism; phospholipid metabolism. Functionally, catalyzes the transfer of an acyl group from acyl-phosphate (acyl-PO(4)) to glycerol-3-phosphate (G3P) to form lysophosphatidic acid (LPA). This enzyme utilizes acyl-phosphate as fatty acyl donor, but not acyl-CoA or acyl-ACP. The chain is Glycerol-3-phosphate acyltransferase from Caulobacter vibrioides (strain ATCC 19089 / CIP 103742 / CB 15) (Caulobacter crescentus).